Reading from the N-terminus, the 242-residue chain is Octanoyltransferase (242 aa).

A BPL/LPL catalytic domain is found at 31-206 (SQTTDEIWFL…LFLKNFGYNQ (176 aa)). Substrate-binding positions include 70-77 (RGGQVTYH), 137-139 (SIG), and 150-152 (GLA). Catalysis depends on C168, which acts as the Acyl-thioester intermediate.

This sequence belongs to the LipB family.

The protein resides in the cytoplasm. The enzyme catalyses octanoyl-[ACP] + L-lysyl-[protein] = N(6)-octanoyl-L-lysyl-[protein] + holo-[ACP] + H(+). It functions in the pathway protein modification; protein lipoylation via endogenous pathway; protein N(6)-(lipoyl)lysine from octanoyl-[acyl-carrier-protein]: step 1/2. Catalyzes the transfer of endogenously produced octanoic acid from octanoyl-acyl-carrier-protein onto the lipoyl domains of lipoate-dependent enzymes. Lipoyl-ACP can also act as a substrate although octanoyl-ACP is likely to be the physiological substrate. This Coxiella burnetii (strain RSA 493 / Nine Mile phase I) protein is Octanoyltransferase.